The primary structure comprises 398 residues: MAKLTVKDVDLKGKKVLVRVDFNVPLKDGVITNDNRITAALPTIKYIIEQGGRAILFSHLGRVKEEADKEGKSLAPVAADLAAKLGQDVVFPGVTRGAELEAAINALEDGQVLLVENTRFEDVDGKKESKNDPELGKYWASLGDGIFVNDAFGTAHRAHASNVGISGNVEKAVAGFLLENEIAYIQEAVETPERPFVAILGGSKVSDKIGVIENLLEKADKVLIGGGMTYTFYKAQGIEIGNSLVEEDKLDVAKALLEKANGKLVLPVDSKEANAFADYTEVKDTEGEAVDPGFLGLDIGPKSIAKFDEALTGAKTVVWNGPMGVFENPDFQAGTIGVMDAIVKQPGVKSIIGGGDSAAAAINLGRADKFSWISTGGGASMELLEGKVLPGLAALTEK.

Substrate-binding positions include 21-23 (DFN), Arg-36, 59-62 (HLGR), Arg-119, and Arg-157. ATP-binding positions include Lys-208, Gly-296, Glu-327, and 354 to 357 (GGDS).

This sequence belongs to the phosphoglycerate kinase family. As to quaternary structure, monomer.

Its subcellular location is the cytoplasm. The catalysed reaction is (2R)-3-phosphoglycerate + ATP = (2R)-3-phospho-glyceroyl phosphate + ADP. It participates in carbohydrate degradation; glycolysis; pyruvate from D-glyceraldehyde 3-phosphate: step 2/5. The chain is Phosphoglycerate kinase from Streptococcus sanguinis (strain SK36).